The chain runs to 134 residues: Large ribosomal subunit protein bL20 (134 aa).

The protein belongs to the bacterial ribosomal protein bL20 family.

Its function is as follows. Binds directly to 23S ribosomal RNA and is necessary for the in vitro assembly process of the 50S ribosomal subunit. It is not involved in the protein synthesizing functions of that subunit. The polypeptide is Large ribosomal subunit protein bL20 (Rhizobium etli (strain ATCC 51251 / DSM 11541 / JCM 21823 / NBRC 15573 / CFN 42)).